A 268-amino-acid chain; its full sequence is MPRMALGLAYDGSSWQGWQTQPHRQTVQDTLEAALARFAGIDGSLPTVCAGRTDTGVHAAMQVVHLDTRLERRAESWVRGVNAFLPPSIAVQWAQPVPDDFHARFSARSRTYLYLLWRGRVRPPLWAGRAGWCFQPLDVQAMRQAASALLGEHDFSSFRSSQCQARHPVRTLHRLDIDERGPFLVFTLRANAFLHHMVRNLMGALLQIGQGRQPVAWMPAVLAARDRRLAAPTFAADGLYLSAIEYPPEYKLNDTDGSGQLLSPFTFA.

Residue D54 is the Nucleophile of the active site. Y112 is a substrate binding site.

It belongs to the tRNA pseudouridine synthase TruA family. As to quaternary structure, homodimer.

It carries out the reaction uridine(38/39/40) in tRNA = pseudouridine(38/39/40) in tRNA. Its function is as follows. Formation of pseudouridine at positions 38, 39 and 40 in the anticodon stem and loop of transfer RNAs. This is tRNA pseudouridine synthase A from Bordetella petrii (strain ATCC BAA-461 / DSM 12804 / CCUG 43448).